We begin with the raw amino-acid sequence, 281 residues long: Deoxyribonuclease-1 (281 aa).

The N-terminal stretch at 1–21 (MRSEMLTALLTLAVLLQVAGS) is a signal peptide. A glycan (N-linked (GlcNAc...) asparagine) is linked at Asn39. Glu99 is a catalytic residue. A disulfide bond links Cys122 and Cys125. The active site involves His155.

It belongs to the DNase I family. Requires Ca(2+) as cofactor. Mg(2+) serves as cofactor. Equivalent levels in pancreas and parotid gland, low amounts in kidney, liver, small intestine, stomach and thymus.

Its subcellular location is the secreted. The protein localises to the zymogen granule. The protein resides in the nucleus envelope. It catalyses the reaction Endonucleolytic cleavage to 5'-phosphodinucleotide and 5'-phosphooligonucleotide end-products.. Serum endocuclease secreted into body fluids by a wide variety of exocrine and endocrine organs. Expressed by non-hematopoietic tissues and preferentially cleaves protein-free DNA. Among other functions, seems to be involved in cell death by apoptosis. Binds specifically to G-actin and blocks actin polymerization. Preferentially attacks double-stranded DNA and produces oligonucleotides with 5'-phospho and 3'-hydroxy termini. Together with DNASE1L3, plays a key role in degrading neutrophil extracellular traps (NETs). NETs are mainly composed of DNA fibers and are released by neutrophils to bind pathogens during inflammation. Degradation of intravascular NETs by DNASE1 and DNASE1L3 is required to prevent formation of clots that obstruct blood vessels and cause organ damage following inflammation. The protein is Deoxyribonuclease-1 (DNASE1) of Oryctolagus cuniculus (Rabbit).